The sequence spans 890 residues: MTDVTIKTLAAERQTSVERLVQQFADAGIRKSADDSVSAQEKQTLIDHLNQKNSGPDKLTLQRKTRSTLNIPGTGGKSKSVQIEVRKKRTFVKRDPQEAERLAAEEQAQREAEEQARREAEESAKREAQQKAEREAAEQAKREAAEQAKREAAEKDKVSNQQDDMTKNAQAEKARREQEAAELKRKAEEEAHRKLEEEARRVAEEARRMAEENKWTDNAEPTEDSSDYHVTTSQHARQAEDESDREVEGGRGRGRNAKAARPKKGNKHAESKADREEARAAVRGGKGGKRKGSSLQQGFQKPAQAVNRDVVIGETITVGELANKMAVKGSQVIKAMMKLGAMATINQVIDQETAQLVAEEMGHKVILRRENELEEAVMSDRDTGAAAEPRAPVVTIMGHVDHGKTSLLDYIRSTKVASGEAGGITQHIGAYHVETENGMITFLDTPGHAAFTSMRARGAQATDIVVLVVAADDGVMPQTIEAIQHAKAAQVPVVVAVNKIDKPEADPDRVKNELSQYGILPEEWGGESQFVHVSAKAGTGIDELLDAILLQAEVLELKAVRKGMASGAVIESFLDKGRGPVATVLVREGTLHKGDIVLCGFEYGRVRAMRNELGQEVLEAGPSIPVEILGLSGVPAAGDEVTVVRDEKKAREVALYRQGKFREVKLARQQKSKLENMFANMTEGEVHEVNIVLKADVQGSVEAISDSLLKLSTDEVKVKIIGSGVGGITETDATLAAASNAILVGFNVRADASARKVIEAESLDLRYYSVIYNLIDEVKAAMSGMLSPELKQQIIGLAEVRDVFKSPKFGAIAGCMVTEGVVKRHNPIRVLRDNVVIYEGELESLRRFKDDVNEVRNGMECGIGVKNYNDVRTGDVIEVFEIIEIQRTIA.

Positions 45 to 304 (LIDHLNQKNS…LQQGFQKPAQ (260 aa)) are disordered. Polar residues predominate over residues 67–81 (STLNIPGTGGKSKSV). A compositionally biased stretch (basic and acidic residues) spans 92–217 (VKRDPQEAER…RMAEENKWTD (126 aa)). Residues 252 to 266 (GRGRNAKAARPKKGN) are compositionally biased toward basic residues. Positions 267 to 280 (KHAESKADREEARA) are enriched in basic and acidic residues. Positions 389–558 (PRAPVVTIMG…LLQAEVLELK (170 aa)) constitute a tr-type G domain. The interval 398–405 (GHVDHGKT) is G1. 398–405 (GHVDHGKT) serves as a coordination point for GTP. The interval 423-427 (GITQH) is G2. The tract at residues 444–447 (DTPG) is G3. GTP is bound by residues 444–448 (DTPGH) and 498–501 (NKID). Residues 498–501 (NKID) are G4. Residues 534–536 (SAK) are G5. K808 bears the N6-acetyllysine mark.

The protein belongs to the TRAFAC class translation factor GTPase superfamily. Classic translation factor GTPase family. IF-2 subfamily.

The protein resides in the cytoplasm. In terms of biological role, one of the essential components for the initiation of protein synthesis. Protects formylmethionyl-tRNA from spontaneous hydrolysis and promotes its binding to the 30S ribosomal subunits. Also involved in the hydrolysis of GTP during the formation of the 70S ribosomal complex. This is Translation initiation factor IF-2 from Shigella sonnei (strain Ss046).